The sequence spans 101 residues: Interleukin-8 (101 aa).

An N-terminal signal peptide occupies residues 1-22 (MTSKLAVALLAAFLLSAALCEA). Arg-27 carries the post-translational modification Citrulline. 2 cysteine pairs are disulfide-bonded: Cys-34-Cys-61 and Cys-36-Cys-77.

Belongs to the intercrine alpha (chemokine CxC) family. As to quaternary structure, homodimer. Interacts with TNFAIP6 (via Link domain); this interaction interferes with chemokine binding to glycosaminoglycans. Post-translationally, citrullination at Arg-27 prevents proteolysis, and dampens tissue inflammation, it also enhances leukocytosis, possibly through impaired chemokine clearance from the blood circulation.

It localises to the secreted. In terms of biological role, chemotactic factor that mediates inflammatory response by attracting neutrophils, basophils, and T-cells to clear pathogens and protect the host from infection. Also plays an important role in neutrophil activation. Released in response to an inflammatory stimulus, exerts its effect by binding to the G-protein-coupled receptors CXCR1 and CXCR2, primarily found in neutrophils, monocytes and endothelial cells. G-protein heterotrimer (alpha, beta, gamma subunits) constitutively binds to CXCR1/CXCR2 receptor and activation by IL8 leads to beta and gamma subunits release from Galpha (GNAI2 in neutrophils) and activation of several downstream signaling pathways including PI3K and MAPK pathways. The protein is Interleukin-8 (CXCL8) of Ovis aries (Sheep).